The following is a 125-amino-acid chain: Temptin (125 aa).

The first 22 residues, 1–22, serve as a signal peptide directing secretion; that stretch reads MEQKRTLRVFLAVSLLCALANA. 2 disulfide bridges follow: Cys40-Cys125 and Cys79-Cys99. Residues 78–125 are disordered; the sequence is LCDMDSDGDGRSNGVELGDPECVWSQGETPARTTDLSHPGFDEATVSC. A compositionally biased stretch (polar residues) spans 103-113; sequence QGETPARTTDL.

As to quaternary structure, binds to attractin and enticin. Produced by the albumen gland of the egg cordons.

The protein localises to the secreted. Functionally, a component of the complex of water-borne protein pheromones that stimulates attraction and mating behavior. Modulates pheromone signaling by direct binding to attractin. This chain is Temptin, found in Aplysia californica (California sea hare).